Here is a 384-residue protein sequence, read N- to C-terminus: G protein-coupled receptor 88 (384 aa).

Over methionine 1 to serine 35 the chain is Extracellular. N-linked (GlcNAc...) asparagine glycosylation occurs at asparagine 3. A helical membrane pass occupies residues leucine 36–valine 56. At serine 57 to glycine 73 the chain is on the cytoplasmic side. A helical membrane pass occupies residues cysteine 74 to leucine 94. Over proline 95–arginine 116 the chain is Extracellular. A helical transmembrane segment spans residues glycine 117–leucine 136. At asparagine 137–threonine 158 the chain is on the cytoplasmic side. Residues alanine 159–tryptophan 179 form a helical membrane-spanning segment. Residues alanine 180–leucine 195 are Extracellular-facing. Residues leucine 196–valine 216 traverse the membrane as a helical segment. The Cytoplasmic segment spans residues arginine 217–serine 285. Residues valine 286–alanine 306 form a helical membrane-spanning segment. The Extracellular portion of the chain corresponds to serine 307–serine 310. A helical membrane pass occupies residues leucine 311–leucine 331. The Cytoplasmic segment spans residues asparagine 332 to tryptophan 384.

Belongs to the G-protein coupled receptor 1 family. In terms of tissue distribution, expressed predominantly in the striatum. Expressed also in olfactory tubercle, nucleus accumbens, amygdala, and neocortex. Spinal cord, pons, and medulla expression remains discrete. Also expressed in peripheral tissues, including adrenal cortex (16 dpc to 21 dpc) and cochlear ganglia (19 dpc to P3) and also at moderate levels in retina (18 dpc to 19 dpc) and spleen (21 dpc to P7).

The protein localises to the cell membrane. It localises to the cell projection. It is found in the cilium membrane. Its subcellular location is the cytoplasm. The protein resides in the nucleus. Orphan G protein-coupled receptor implicated in a large repertoire of behavioral responses that engage motor activities, spatial learning, and emotional processing. May play a role in the regulation of cognitive and motor function. Couples with the heterotrimeric G protein complex of the G(i) subfamily, consisting of GNAI1, GNB1 and GNG2, thereby acting through a G(i)-mediated pathway. Plays a role in the attenuation of D1 dopamine receptor (D1R)-mediated cAMP response in ciliated cells. In non-ciliated cells, involved in the inhibition of the beta-2 adrenergic receptor (B2AR) response. This chain is G protein-coupled receptor 88 (Gpr88), found in Rattus norvegicus (Rat).